We begin with the raw amino-acid sequence, 803 residues long: Translation initiation factor IF-2 (803 aa).

Disordered regions lie at residues Pro95–Glu125 and Glu138–Glu178. Positions Val111 to Asn121 are enriched in polar residues. Over residues Glu138 to Lys155 the composition is skewed to basic and acidic residues. The segment covering Lys156–Lys167 has biased composition (basic residues). Over residues Pro168–Glu178 the composition is skewed to basic and acidic residues. The tr-type G domain maps to Pro302–Lys471. A G1 region spans residues Gly311–Thr318. GTP is bound at residue Gly311 to Thr318. The interval Gly336–His340 is G2. Residues Asp357–Gly360 are G3. Residues Asp357 to His361 and Asn411 to Asp414 contribute to the GTP site. The G4 stretch occupies residues Asn411–Asp414. The interval Ser447–Lys449 is G5.

It belongs to the TRAFAC class translation factor GTPase superfamily. Classic translation factor GTPase family. IF-2 subfamily.

The protein resides in the cytoplasm. Its function is as follows. One of the essential components for the initiation of protein synthesis. Protects formylmethionyl-tRNA from spontaneous hydrolysis and promotes its binding to the 30S ribosomal subunits. Also involved in the hydrolysis of GTP during the formation of the 70S ribosomal complex. The polypeptide is Translation initiation factor IF-2 (Coxiella burnetii (strain CbuK_Q154) (Coxiella burnetii (strain Q154))).